Here is a 161-residue protein sequence, read N- to C-terminus: Cyclic pyranopterin monophosphate synthase (161 aa).

Substrate is bound by residues 75–77 and 113–114; these read LCH and ME. The active site involves Asp-128.

This sequence belongs to the MoaC family. In terms of assembly, homohexamer; trimer of dimers.

It carries out the reaction (8S)-3',8-cyclo-7,8-dihydroguanosine 5'-triphosphate = cyclic pyranopterin phosphate + diphosphate. It functions in the pathway cofactor biosynthesis; molybdopterin biosynthesis. Catalyzes the conversion of (8S)-3',8-cyclo-7,8-dihydroguanosine 5'-triphosphate to cyclic pyranopterin monophosphate (cPMP). The chain is Cyclic pyranopterin monophosphate synthase from Erwinia tasmaniensis (strain DSM 17950 / CFBP 7177 / CIP 109463 / NCPPB 4357 / Et1/99).